Consider the following 359-residue polypeptide: Flavonoid 8-O-methyltransferase 1 (359 aa).

Asp-223 is a binding site for S-adenosyl-L-methionine. His-261 serves as the catalytic Proton acceptor.

The protein belongs to the class I-like SAM-binding methyltransferase superfamily. Cation-independent O-methyltransferase family. In terms of tissue distribution, expressed in leaves and trichomes, especially in cv. SD and cv. EMX-1, but barely in cv. MC and cv. SW.

The catalysed reaction is an 8-hydroxyflavone + S-adenosyl-L-methionine = an 8-methoxyflavone + S-adenosyl-L-homocysteine + H(+). It catalyses the reaction 4',7,8-trihydroxyflavone + S-adenosyl-L-methionine = 4',7-dihydroxy-8-methoxyflavone + S-adenosyl-L-homocysteine + H(+). The enzyme catalyses 7,8-dihydroxyflavone + S-adenosyl-L-methionine = 7-hydroxy-8-methoxyflavone + S-adenosyl-L-homocysteine + H(+). It carries out the reaction 3',4',7,8-tetrahydroxyflavone + S-adenosyl-L-methionine = 3',4,7-trihydroxy-8-methoxyflavone + S-adenosyl-L-homocysteine + H(+). It functions in the pathway flavonoid metabolism. With respect to regulation, strongly inhibited by gardenin B (GARD B). Functionally, cation-independent flavonoid 8-O-methyltransferase involved in the biosynthesis of polymethoxylated flavonoids natural products such as nevadensin and salvigenin, aroma compounds which contribute to the flavor of sweet basil, and exhibit pharmacological activities such as anti-allergic, anti-oxidant, antibacterial, anti-proliferative, and anti-inflammatory effects. Catalyzes S-adenosylmethionine-dependent regioselective 8-O-methylation of flavonoids; mediates likely the conversion of pilosin (PIL) to nevadensin (NEV) and of 8-hydroxysalvigenin (8-OH-SALV) to gardenin B (GARD B). Can also use 3',4',7,8-tetrahydroxyflavone as substrate. Accepts other unnatural O-diphenols including 7,8,4'-trihydroxy-flavone and 7-O-methyl-8-hydroxy-flavone, and, with a lower efficiency, 7,8-dihydroxy-flavone, as substrates. This is Flavonoid 8-O-methyltransferase 1 from Ocimum basilicum (Sweet basil).